The primary structure comprises 1372 residues: Capping protein, Arp2/3 and myosin-I linker protein 3 (1372 aa).

The segment at arginine 126–serine 151 is disordered. Over residues threonine 138–serine 151 the composition is skewed to low complexity. 10 LRR repeats span residues serine 244–alanine 264, valine 274–glutamine 295, glycine 303–glycine 323, serine 335–tyrosine 357, alanine 365–leucine 385, histidine 392–proline 413, threonine 424–leucine 444, aspartate 455–glutamate 475, cysteine 482–valine 501, and serine 509–leucine 530. 3 disordered regions span residues threonine 865–threonine 900, lysine 970–asparagine 1003, and glutamate 1024–aspartate 1372. Positions proline 982–proline 995 are enriched in pro residues. Residues serine 1040–proline 1073 form a necessary for localization at the cell membrane region. The span at glutamine 1048 to serine 1063 shows a compositional bias: basic residues. Over residues leucine 1079–proline 1098 the composition is skewed to pro residues. The span at serine 1099–serine 1109 shows a compositional bias: low complexity. 2 stretches are compositionally biased toward basic and acidic residues: residues glutamate 1163–proline 1177 and arginine 1219–glutamate 1229. Residues proline 1233–serine 1244 show a composition bias toward polar residues. Positions glutamine 1348–proline 1361 are enriched in basic and acidic residues.

Belongs to the CARMIL family. In terms of tissue distribution, widely expressed, with much higher levels in fetal tissues than in adult ones. Up-regulated in certain cancer tissues.

Its subcellular location is the cytoplasm. The protein resides in the cell membrane. In Homo sapiens (Human), this protein is Capping protein, Arp2/3 and myosin-I linker protein 3.